The sequence spans 1517 residues: DNA-directed RNA polymerase subunit beta' (1517 aa).

Residues Cys71, Cys73, Cys86, and Cys89 each contribute to the Zn(2+) site. Mg(2+) contacts are provided by Asp482, Asp484, and Asp486. Zn(2+)-binding residues include Cys812, Cys886, Cys893, and Cys896.

Belongs to the RNA polymerase beta' chain family. The RNAP catalytic core consists of 2 alpha, 1 beta, 1 beta' and 1 omega subunit. When a sigma factor is associated with the core the holoenzyme is formed, which can initiate transcription. Mg(2+) serves as cofactor. It depends on Zn(2+) as a cofactor.

The enzyme catalyses RNA(n) + a ribonucleoside 5'-triphosphate = RNA(n+1) + diphosphate. Its function is as follows. DNA-dependent RNA polymerase catalyzes the transcription of DNA into RNA using the four ribonucleoside triphosphates as substrates. The chain is DNA-directed RNA polymerase subunit beta' from Campylobacter lari (strain RM2100 / D67 / ATCC BAA-1060).